The chain runs to 429 residues: Glucose-1-phosphate adenylyltransferase (429 aa).

Alpha-D-glucose 1-phosphate is bound by residues Gly162, 177–178 (EK), and Ser209.

It belongs to the bacterial/plant glucose-1-phosphate adenylyltransferase family. As to quaternary structure, homotetramer.

The catalysed reaction is alpha-D-glucose 1-phosphate + ATP + H(+) = ADP-alpha-D-glucose + diphosphate. Its pathway is glycan biosynthesis; glycogen biosynthesis. Functionally, involved in the biosynthesis of ADP-glucose, a building block required for the elongation reactions to produce glycogen. Catalyzes the reaction between ATP and alpha-D-glucose 1-phosphate (G1P) to produce pyrophosphate and ADP-Glc. This chain is Glucose-1-phosphate adenylyltransferase, found in Picosynechococcus sp. (strain ATCC 27264 / PCC 7002 / PR-6) (Agmenellum quadruplicatum).